Consider the following 609-residue polypeptide: MAIASGSWVATVNHHANPHSFTSPTKPIFFLSQKPHNFHVCSSRCSMVLEEDEKKSPSPKEDKWPFFEPGPNDLNRVLSRFLRDPETRKLSSEFYEKAKENSELRTTKHLISYLVSSKSWDLLVSVCEDLREHKALPDGQTCSNLIRSCIRDRKFRITHCLLSVFRSDKSLAVSASDAAMKGFNKLQMYSSTIQVFDRLKQSVGVEPSPGCYCRIMEAHEKIGENHKVVELFQEFKSQRLSFLAKESGSIYTIVCSSLAKSGRAFEALEVLEEMKDKGIPESSELYSMLIRAFAEAREVVITEKLFKEAGGKKLLKDPEMCLKVVLMYVREGNMETTLEVVAAMRKAELKVTDCILCAIVNGFSKQRGFAEAVKVYEWAMKEECEAGQVTYAIAINAYCRLEKYNKAEMLFDEMVKKGFDKCVVAYSNIMDMYGKTRRLSDAVRLMAKMKQRGCKPNIWIYNSLIDMHGRAMDLRRAEKIWKEMKRAKVLPDKVSYTSMISAYNRSKELERCVELYQEFRMNRGKIDRAMAGIMVGVFSKTSRIDELMRLLQDMKVEGTRLDARLYSSALNALRDAGLNSQIRWLQESFDAAQTSTSKYSNTKNTGTLS.

Residues 1–44 constitute a chloroplast transit peptide; sequence MAIASGSWVATVNHHANPHSFTSPTKPIFFLSQKPHNFHVCSSR. 13 PPR repeats span residues 103–137, 138–168, 172–207, 208–242, 247–281, 282–316, 317–351, 352–386, 387–421, 422–456, 457–491, 492–526, and 527–561; these read ELRTTKHLISYLVSSKSWDLLVSVCEDLREHKALP, DGQTCSNLIRSCIRDRKFRITHCLLSVFRSD, AVSASDAAMKGFNKLQMYSSTIQVFDRLKQSVGVEP, SPGCYCRIMEAHEKIGENHKVVELFQEFKSQRLSF, SGSIYTIVCSSLAKSGRAFEALEVLEEMKDKGIPE, SSELYSMLIRAFAEAREVVITEKLFKEAGGKKLLK, DPEMCLKVVLMYVREGNMETTLEVVAAMRKAELKV, TDCILCAIVNGFSKQRGFAEAVKVYEWAMKEECEA, GQVTYAIAINAYCRLEKYNKAEMLFDEMVKKGFDK, CVVAYSNIMDMYGKTRRLSDAVRLMAKMKQRGCKP, NIWIYNSLIDMHGRAMDLRRAEKIWKEMKRAKVLP, DKVSYTSMISAYNRSKELERCVELYQEFRMNRGKI, and DRAMAGIMVGVFSKTSRIDELMRLLQDMKVEGTRL.

Belongs to the PPR family. P subfamily.

It localises to the plastid. Its subcellular location is the chloroplast. This chain is Pentatricopeptide repeat-containing protein At5g13770, chloroplastic, found in Arabidopsis thaliana (Mouse-ear cress).